We begin with the raw amino-acid sequence, 349 residues long: ATPase GET3 (349 aa).

Position 26 to 33 (26 to 33 (KGGVGKTT)) interacts with ATP. Residue Asp57 is part of the active site. ATP is bound by residues Glu240 and Asn267. Cys280 and Cys283 together coordinate Zn(2+).

The protein belongs to the arsA ATPase family. Homodimer. Component of the Golgi to ER traffic (GET) complex, which is composed of GET1, GET2 and GET3. Within the complex, GET1 and GET2 form a heterotetramer which is stabilized by phosphatidylinositol binding and which binds to the GET3 homodimer. Interacts with the chloride channel protein GEF1.

The protein resides in the cytoplasm. Its subcellular location is the endoplasmic reticulum. The protein localises to the golgi apparatus. Its function is as follows. ATPase required for the post-translational delivery of tail-anchored (TA) proteins to the endoplasmic reticulum. Recognizes and selectively binds the transmembrane domain of TA proteins in the cytosol. This complex then targets to the endoplasmic reticulum by membrane-bound receptors GET1 and GET2, where the tail-anchored protein is released for insertion. This process is regulated by ATP binding and hydrolysis. ATP binding drives the homodimer towards the closed dimer state, facilitating recognition of newly synthesized TA membrane proteins. ATP hydrolysis is required for insertion. Subsequently, the homodimer reverts towards the open dimer state, lowering its affinity for the GET1-GET2 receptor, and returning it to the cytosol to initiate a new round of targeting. Cooperates with the HDEL receptor ERD2 to mediate the ATP-dependent retrieval of resident ER proteins that contain a C-terminal H-D-E-L retention signal from the Golgi to the ER. Involved in low-level resistance to the oxyanions arsenite and arsenate, and in heat tolerance. In Lachancea thermotolerans (strain ATCC 56472 / CBS 6340 / NRRL Y-8284) (Yeast), this protein is ATPase GET3.